The sequence spans 488 residues: MTFNNKTIDELHDLLVKKEISAVELTKATLEDIKSREGAVDAFLTITEDAALAQAAALDEKGIDADNVMAGIPLAVKDNISTKGILTTAASKMLYNYEPIFDATSVAQAYAKDMIIVGKTNMDEFAMGGSNENSAFKPTKNAWDQTKVPGGSSGGSAAAVASGQVRLSLGSDTGGSIRQPAAFNGIVGMKPTYGTVSRFGLIAFGSSLDQIGPFSQTVKENAQLLNVISGHDVKDATSTINEIADFTSKIGQDIKGMKIALPKEYMGEGIDPQVKETILKAAKHLESLGAIIEEVSLPHSKYGVAVYYIIASSEASSNLQRFDGIRYGFRAEDATNLDEIYVKTRSQGFGEEVKRRIMLGTFSLSSGYYDAYFKKAGQVRTLIIQDFEKVFADYDLILGPTAPTVAFGLDTLNHDPVAMYLADLLTIPVNLAGLPGLSIPAGFVEGLPVGLQLIGPKYSEETIYQVAAAFEATTDYHKQQPVIFGGAN.

Residues Lys77 and Ser152 each act as charge relay system in the active site. Ser176 serves as the catalytic Acyl-ester intermediate.

It belongs to the amidase family. GatA subfamily. As to quaternary structure, heterotrimer of A, B and C subunits.

It carries out the reaction L-glutamyl-tRNA(Gln) + L-glutamine + ATP + H2O = L-glutaminyl-tRNA(Gln) + L-glutamate + ADP + phosphate + H(+). In terms of biological role, allows the formation of correctly charged Gln-tRNA(Gln) through the transamidation of misacylated Glu-tRNA(Gln) in organisms which lack glutaminyl-tRNA synthetase. The reaction takes place in the presence of glutamine and ATP through an activated gamma-phospho-Glu-tRNA(Gln). In Streptococcus suis (strain 05ZYH33), this protein is Glutamyl-tRNA(Gln) amidotransferase subunit A.